The sequence spans 324 residues: UDP-N-acetylenolpyruvoylglucosamine reductase (324 aa).

Residues 39 to 220 (RTGGLAELFY…RAAMHEVALH (182 aa)) form the FAD-binding PCMH-type domain. Arg-185 is a catalytic residue. Ser-234 (proton donor) is an active-site residue. Residue Glu-304 is part of the active site.

This sequence belongs to the MurB family. FAD serves as cofactor.

It is found in the cytoplasm. It catalyses the reaction UDP-N-acetyl-alpha-D-muramate + NADP(+) = UDP-N-acetyl-3-O-(1-carboxyvinyl)-alpha-D-glucosamine + NADPH + H(+). The protein operates within cell wall biogenesis; peptidoglycan biosynthesis. In terms of biological role, cell wall formation. In Bartonella bacilliformis (strain ATCC 35685 / KC583 / Herrer 020/F12,63), this protein is UDP-N-acetylenolpyruvoylglucosamine reductase.